The chain runs to 142 residues: MKTFSAKPQEVERKWYVIDAADKVLGRVAVEAANILRGKNKTIFTPHVDCGDFVIIVNADKVVLTGNKENAKIYTRFSGYVGGKQVDTPRKIRARRPELLLELAVKGMVPHTRLGRQQMTKLKVYAGASHPHEAQQPTAITL.

It belongs to the universal ribosomal protein uL13 family. Part of the 50S ribosomal subunit.

Its function is as follows. This protein is one of the early assembly proteins of the 50S ribosomal subunit, although it is not seen to bind rRNA by itself. It is important during the early stages of 50S assembly. In Akkermansia muciniphila (strain ATCC BAA-835 / DSM 22959 / JCM 33894 / BCRC 81048 / CCUG 64013 / CIP 107961 / Muc), this protein is Large ribosomal subunit protein uL13.